The sequence spans 106 residues: Terpredoxin (106 aa).

In terms of domain architecture, 2Fe-2S ferredoxin-type spans P2 to A106. Residues C40, C46, C49, and C87 each contribute to the [2Fe-2S] cluster site.

The protein belongs to the adrenodoxin/putidaredoxin family. [2Fe-2S] cluster serves as cofactor.

Its function is as follows. The oxidation of alpha-terpineol by cytochrome p450-TERP requires the participation of a flavoprotein, terpredoxin reductase, and an iron-sulfur protein, terpredoxin, to mediate the transfer of electrons from NADH to P450 for oxygen activation. The polypeptide is Terpredoxin (terPB) (Pseudomonas sp).